Reading from the N-terminus, the 437-residue chain is Phosphomethylpyrimidine synthase (437 aa).

Substrate contacts are provided by residues Asn-69, Met-98, Tyr-127, His-163, 185–187 (SRG), 226–229 (DACR), and Glu-265. His-269 serves as a coordination point for Zn(2+). A substrate-binding site is contributed by Tyr-292. His-333 provides a ligand contact to Zn(2+). 3 residues coordinate [4Fe-4S] cluster: Cys-409, Cys-412, and Cys-416.

The protein belongs to the ThiC family. The cofactor is [4Fe-4S] cluster.

The enzyme catalyses 5-amino-1-(5-phospho-beta-D-ribosyl)imidazole + S-adenosyl-L-methionine = 4-amino-2-methyl-5-(phosphooxymethyl)pyrimidine + CO + 5'-deoxyadenosine + formate + L-methionine + 3 H(+). The protein operates within cofactor biosynthesis; thiamine diphosphate biosynthesis. Catalyzes the synthesis of the hydroxymethylpyrimidine phosphate (HMP-P) moiety of thiamine from aminoimidazole ribotide (AIR) in a radical S-adenosyl-L-methionine (SAM)-dependent reaction. The polypeptide is Phosphomethylpyrimidine synthase (Clostridium novyi (strain NT)).